A 630-amino-acid chain; its full sequence is Plastin-1 (630 aa).

Position 1 is an N-acetylmethionine (Met1). EF-hand domains follow at residues 11–46 (EELE…ASLP) and 51–86 (KVRE…LKSK). Residues Asp24, Asp26, Ser28, Tyr30, Glu35, Asp64, Asn66, Asp68, Arg70, and Glu75 each coordinate Ca(2+). Actin-binding regions lie at residues 108–381 (TSSI…GLHK) and 382–626 (PDNN…GKGL). Calponin-homology (CH) domains lie at 122-238 (EEEK…KVGL), 266-377 (LSPE…NTYP), 396-505 (SKEE…RRYT), and 517-626 (KVND…GKGL).

Monomer. Post-translationally, phosphorylated.

The protein resides in the cytoplasm. The protein localises to the cell projection. It localises to the stereocilium. In terms of biological role, actin-bundling protein. In the inner ear, it is required for stereocilia formation. Mediates liquid packing of actin filaments that is necessary for stereocilia to grow to their proper dimensions. This chain is Plastin-1 (PLS1), found in Bos taurus (Bovine).